The chain runs to 721 residues: Penicillin-binding protein activator LpoA (721 aa).

The signal sequence occupies residues 1–26 (MVPLTFLRTKASRSLPIMLAALIFAG). C27 is lipidated: N-palmitoyl cysteine. Residue C27 is the site of S-diacylglycerol cysteine attachment. Residues 316–330 (TSDLTSAQAPAQGTM) show a composition bias toward polar residues. Residues 316 to 393 (TSDLTSAQAP…PAAQPQAVAA (78 aa)) form a disordered region. The span at 331–393 (QNPVTAPTTP…PAAQPQAVAA (63 aa)) shows a compositional bias: low complexity.

The protein belongs to the LpoA family. As to quaternary structure, interacts with PBP1a.

It is found in the cell outer membrane. In terms of biological role, regulator of peptidoglycan synthesis that is essential for the function of penicillin-binding protein 1A (PBP1a). The chain is Penicillin-binding protein activator LpoA from Enterobacter sp. (strain 638).